The sequence spans 567 residues: Proline--tRNA ligase (567 aa).

It belongs to the class-II aminoacyl-tRNA synthetase family. ProS type 1 subfamily. In terms of assembly, homodimer.

The protein localises to the cytoplasm. The catalysed reaction is tRNA(Pro) + L-proline + ATP = L-prolyl-tRNA(Pro) + AMP + diphosphate. In terms of biological role, catalyzes the attachment of proline to tRNA(Pro) in a two-step reaction: proline is first activated by ATP to form Pro-AMP and then transferred to the acceptor end of tRNA(Pro). As ProRS can inadvertently accommodate and process non-cognate amino acids such as alanine and cysteine, to avoid such errors it has two additional distinct editing activities against alanine. One activity is designated as 'pretransfer' editing and involves the tRNA(Pro)-independent hydrolysis of activated Ala-AMP. The other activity is designated 'posttransfer' editing and involves deacylation of mischarged Ala-tRNA(Pro). The misacylated Cys-tRNA(Pro) is not edited by ProRS. This is Proline--tRNA ligase from Streptomyces griseus subsp. griseus (strain JCM 4626 / CBS 651.72 / NBRC 13350 / KCC S-0626 / ISP 5235).